Here is a 129-residue protein sequence, read N- to C-terminus: Transcriptional activator protein (129 aa).

Residues 1–12 (MRSSSPSQPPSI) are compositionally biased toward low complexity. The tract at residues 1–21 (MRSSSPSQPPSIKKAHRQAKR) is disordered. Residues 13–28 (KKAHRQAKRRAIRRRR) carry the Nuclear localization signal motif. Residues 33–50 (CGCSIYFHIDCTGHGFTH) fold into a zinc finger. The disordered stretch occupies residues 84–114 (IHQNEDIPCTNTVQPQPEESVASPQSLPELP). Polar residues predominate over residues 92 to 109 (CTNTVQPQPEESVASPQS). A transactivation region spans residues 115-129 (SLDDFDDSFWVNLFK).

The protein belongs to the geminiviridae transcriptional activator protein family. In terms of assembly, monomer. Homodimer. Homooligomer. Self-interaction correlates with nuclear localization and efficient activation of transcription. Monomers suppress local silencing by interacting with and inactivating host adenosine kinase 2 (ADK2) in the cytoplasm. Interacts with and inhibits host SNF1 kinase. Binds to ssDNA. In terms of processing, phosphorylated.

The protein localises to the host nucleus. It localises to the host cytoplasm. Strong activator of the late viral genes promoters. Enhances the expression of the capsid protein and nuclear shuttle protein. Acts as a suppressor of RNA-mediated gene silencing, also known as post-transcriptional gene silencing (PTGS), a mechanism of plant viral defense that limits the accumulation of viral RNAs. Suppresses the host RNA silencing by inhibiting adenosine kinase 2 (ADK2), a kinase involved in a general methylation pathway. Also suppresses the host basal defense by interacting with and inhibiting SNF1 kinase, a key regulator of cell metabolism implicated in innate antiviral defense. Determines pathogenicity. In Abutilon (Upland cotton), this protein is Transcriptional activator protein.